A 448-amino-acid chain; its full sequence is N-succinylarginine dihydrolase (448 aa).

Substrate-binding positions include 19–28 (GGLSYGNVAS), N110, and 137–138 (HR). E174 is a catalytic residue. R214 serves as a coordination point for substrate. H250 is a catalytic residue. 2 residues coordinate substrate: D252 and N365. The active-site Nucleophile is C371.

The protein belongs to the succinylarginine dihydrolase family. In terms of assembly, homodimer.

It carries out the reaction N(2)-succinyl-L-arginine + 2 H2O + 2 H(+) = N(2)-succinyl-L-ornithine + 2 NH4(+) + CO2. The protein operates within amino-acid degradation; L-arginine degradation via AST pathway; L-glutamate and succinate from L-arginine: step 2/5. In terms of biological role, catalyzes the hydrolysis of N(2)-succinylarginine into N(2)-succinylornithine, ammonia and CO(2). The polypeptide is N-succinylarginine dihydrolase (Pseudomonas savastanoi pv. phaseolicola (strain 1448A / Race 6) (Pseudomonas syringae pv. phaseolicola (strain 1448A / Race 6))).